A 212-amino-acid chain; its full sequence is Octanoyltransferase (212 aa).

In terms of domain architecture, BPL/LPL catalytic spans alanine 31–isoleucine 209. Substrate contacts are provided by residues arginine 70 to histidine 77, serine 138 to glycine 140, and glycine 151 to alanine 153. Cysteine 169 serves as the catalytic Acyl-thioester intermediate.

It belongs to the LipB family.

It is found in the cytoplasm. The enzyme catalyses octanoyl-[ACP] + L-lysyl-[protein] = N(6)-octanoyl-L-lysyl-[protein] + holo-[ACP] + H(+). The protein operates within protein modification; protein lipoylation via endogenous pathway; protein N(6)-(lipoyl)lysine from octanoyl-[acyl-carrier-protein]: step 1/2. Catalyzes the transfer of endogenously produced octanoic acid from octanoyl-acyl-carrier-protein onto the lipoyl domains of lipoate-dependent enzymes. Lipoyl-ACP can also act as a substrate although octanoyl-ACP is likely to be the physiological substrate. The sequence is that of Octanoyltransferase from Haemophilus influenzae (strain PittEE).